The following is a 201-amino-acid chain: Urease accessory protein UreG (201 aa).

Position 11 to 18 (11 to 18 (GPVGSGKT)) interacts with GTP.

It belongs to the SIMIBI class G3E GTPase family. UreG subfamily. As to quaternary structure, homodimer. UreD, UreF and UreG form a complex that acts as a GTP-hydrolysis-dependent molecular chaperone, activating the urease apoprotein by helping to assemble the nickel containing metallocenter of UreC. The UreE protein probably delivers the nickel.

It is found in the cytoplasm. In terms of biological role, facilitates the functional incorporation of the urease nickel metallocenter. This process requires GTP hydrolysis, probably effectuated by UreG. The protein is Urease accessory protein UreG of Synechococcus sp. (strain CC9902).